A 373-amino-acid polypeptide reads, in one-letter code: Chaperone protein DnaJ (373 aa).

One can recognise a J domain in the interval 4–68; that stretch reads DFYEILGVSR…QARANYDRFG (65 aa). The CR-type zinc finger occupies 132-214; sequence GGEKEIRINH…CGGQGHIQVS (83 aa). Positions 145, 148, 162, 165, 188, 191, 202, and 205 each coordinate Zn(2+). CXXCXGXG motif repeat units follow at residues 145–152, 162–169, 188–195, and 202–209; these read CKTCQGTG, CSTCGGVG, CPTCGGSG, and CESCGGQG.

The protein belongs to the DnaJ family. In terms of assembly, homodimer. Requires Zn(2+) as cofactor.

The protein localises to the cytoplasm. Participates actively in the response to hyperosmotic and heat shock by preventing the aggregation of stress-denatured proteins and by disaggregating proteins, also in an autonomous, DnaK-independent fashion. Unfolded proteins bind initially to DnaJ; upon interaction with the DnaJ-bound protein, DnaK hydrolyzes its bound ATP, resulting in the formation of a stable complex. GrpE releases ADP from DnaK; ATP binding to DnaK triggers the release of the substrate protein, thus completing the reaction cycle. Several rounds of ATP-dependent interactions between DnaJ, DnaK and GrpE are required for fully efficient folding. Also involved, together with DnaK and GrpE, in the DNA replication of plasmids through activation of initiation proteins. This is Chaperone protein DnaJ from Thermosynechococcus vestitus (strain NIES-2133 / IAM M-273 / BP-1).